The following is a 628-amino-acid chain: Alpha pinene synthase, chloroplastic (628 aa).

The N-terminal 46 residues, 1 to 46, are a transit peptide targeting the chloroplast; that stretch reads MSLGCITPLASAMVGPKLVRPLIHHNPLFHHKPLNRPYLQTKIPLR. Positions 381, 385, and 532 each coordinate Mg(2+). Positions 381-385 match the DDXXD motif motif; sequence DDMYD.

Belongs to the terpene synthase family. Tpsa subfamily. It depends on Mg(2+) as a cofactor. The cofactor is Mn(2+).

It localises to the plastid. It is found in the chloroplast. The catalysed reaction is (2E)-geranyl diphosphate = alpha-pinene + diphosphate. It functions in the pathway secondary metabolite biosynthesis; terpenoid biosynthesis. Monoterpene synthase involved in the biosynthesis of volatile compounds. Mediates the conversion of (2E)-geranyl diphosphate (GPP) into alpha-pinene. In Chamaecyparis formosensis (Formosan cypress), this protein is Alpha pinene synthase, chloroplastic.